Consider the following 111-residue polypeptide: Gastrula zinc finger protein XlCGF32.1 (111 aa).

4 consecutive C2H2-type zinc fingers follow at residues 6–28 (FDCT…FLCH), 34–56 (FVCV…LRIH), 62–84 (SVCP…MRIH), and 89–111 (FMCS…LQIH).

This sequence belongs to the krueppel C2H2-type zinc-finger protein family.

The protein resides in the nucleus. In terms of biological role, may be involved in transcriptional regulation. The polypeptide is Gastrula zinc finger protein XlCGF32.1 (Xenopus laevis (African clawed frog)).